Reading from the N-terminus, the 295-residue chain is Glutamyl-Q tRNA(Asp) synthetase (295 aa).

L-glutamate contacts are provided by residues 9 to 13 (RFAPT) and Glu-45. Positions 12 to 22 (PTPSGFLHFGS) match the 'HIGH' region motif. Cys-101, Cys-103, Tyr-115, and Cys-119 together coordinate Zn(2+). L-glutamate-binding residues include Tyr-172 and Arg-190. Positions 228 to 232 (KLGKS) match the 'KMSKS' region motif. Lys-231 is an ATP binding site.

This sequence belongs to the class-I aminoacyl-tRNA synthetase family. GluQ subfamily. Requires Zn(2+) as cofactor.

Its function is as follows. Catalyzes the tRNA-independent activation of glutamate in presence of ATP and the subsequent transfer of glutamate onto a tRNA(Asp). Glutamate is transferred on the 2-amino-5-(4,5-dihydroxy-2-cyclopenten-1-yl) moiety of the queuosine in the wobble position of the QUC anticodon. This Pseudomonas entomophila (strain L48) protein is Glutamyl-Q tRNA(Asp) synthetase.